We begin with the raw amino-acid sequence, 126 residues long: Large ribosomal subunit protein uL22 (126 aa).

It belongs to the universal ribosomal protein uL22 family. Part of the 50S ribosomal subunit.

In terms of biological role, this protein binds specifically to 23S rRNA; its binding is stimulated by other ribosomal proteins, e.g. L4, L17, and L20. It is important during the early stages of 50S assembly. It makes multiple contacts with different domains of the 23S rRNA in the assembled 50S subunit and ribosome. Its function is as follows. The globular domain of the protein is located near the polypeptide exit tunnel on the outside of the subunit, while an extended beta-hairpin is found that lines the wall of the exit tunnel in the center of the 70S ribosome. The sequence is that of Large ribosomal subunit protein uL22 from Rhodospirillum rubrum (strain ATCC 11170 / ATH 1.1.1 / DSM 467 / LMG 4362 / NCIMB 8255 / S1).